Here is a 215-residue protein sequence, read N- to C-terminus: MPPTAPPEKMMFQLILRRRGISDQAVLRAMEEVPREEFVLPADRADAYRDSAMAIACGQTISQPFVVAYMTEQLKLQKSHRVLEIGTGSGYQAAVLARLTDHVLTVERFRTLADRARERLEKLNCFNVEVMLGDGYALPAGAGQFDRIIVTAAMEDIPQSLLDRLEPDGILIAPVGPHHGVQRLVRVTRTGDRFDRKELVDVRFVPAIPGIAREL.

Ser-62 is an active-site residue.

This sequence belongs to the methyltransferase superfamily. L-isoaspartyl/D-aspartyl protein methyltransferase family.

The protein resides in the cytoplasm. The catalysed reaction is [protein]-L-isoaspartate + S-adenosyl-L-methionine = [protein]-L-isoaspartate alpha-methyl ester + S-adenosyl-L-homocysteine. In terms of biological role, catalyzes the methyl esterification of L-isoaspartyl residues in peptides and proteins that result from spontaneous decomposition of normal L-aspartyl and L-asparaginyl residues. It plays a role in the repair and/or degradation of damaged proteins. This is Protein-L-isoaspartate O-methyltransferase from Bradyrhizobium sp. (strain ORS 278).